Here is a 390-residue protein sequence, read N- to C-terminus: GLH-binding kinase 1 (390 aa).

The Protein kinase domain maps to 38 to 338 (YVNLSFLNAG…VEDALNHPYV (301 aa)). Residues 44–52 (LNAGAQGTV) and K67 each bind ATP. D164 functions as the Proton acceptor in the catalytic mechanism. Phosphoserine is present on S198. Y200 bears the Phosphotyrosine mark.

It belongs to the protein kinase superfamily. CMGC Ser/Thr protein kinase family. MAP kinase subfamily. In terms of assembly, interacts with glh-1, glh-2 (via C-terminus), glh-3 (via C-terminus) and glh-4 (via C-terminus). Interacts with csn-5; the interaction may prevent glh-1 degradation induced by kgb-1. Interacts with fos-1. Mg(2+) is required as a cofactor. Post-translationally, may be phosphorylated by mek-1 on Ser-198 and/or Tyr-200. Phosphorylation is induced upon Cu(2+) and arsenite-mediated cell stimulation and by fasting. Expressed in somatic and germline tissues.

The protein resides in the cytoplasm. The catalysed reaction is L-seryl-[protein] + ATP = O-phospho-L-seryl-[protein] + ADP + H(+). It catalyses the reaction L-threonyl-[protein] + ATP = O-phospho-L-threonyl-[protein] + ADP + H(+). Its activity is regulated as follows. Activated by mek-1 mediated phosphorylation. No differences in basal activation between larvae and adults. Inhibited by phosphatase vhp-1. Functionally, mitogen-activated protein kinase which is an essential component of the JNK pathway composed of mlk-1, mek-1 and kgb-1. Phosphorylates the transcription factor fos-1 which prevents fos-1 dimerization and promoter binding and results in activation of target genes including F53A9.2/kreg-1 and lys-3/kreg-2. Phosphorylates jun-1 and activates the AP-1 transcription factor which is a heterodimer of jun-1 and fos-1. Phosphorylates glh-1 in vitro which may play a role in controlling glh-1 protein levels in the germline by targeting it for degradation by the proteasome. Required for oogenesis and probably also for spermatogenesis. Involved in the response to environmental stress such as heavy metals, infection and protein folding stress in an age-dependent manner. In larvae, has a protective role which becomes detrimental in adults. May control susceptibility to infection, heavy metal stress and premature lethality by regulating daf-16 cellular localization. Involved in the transcriptional response to bacterial pore-forming toxins and to fasting. Required for fasting-induced longevity. Involved in axon regeneration after injury downstream of tyrosine receptor svh-2. This Caenorhabditis elegans protein is GLH-binding kinase 1.